A 293-amino-acid polypeptide reads, in one-letter code: MTISVPATSANLGPGFDTLGLALELKNRFSIKPSSLSSIQIRGEGSKNPKLRVDNIFVRIFQETFAKLTEERTNFRFQFHNQIPISRGLGSSSAVIIGAISAAFMMAQKKATPEEILSLALAYESHPDNITPACVGGFTVATTRENSVFYIQKPLPDSIKAVVVIPHRPTSTSYSRQTLPKRYSMRDSVFNLSRSSLLTAAFFSERWDLLREASRDRFHQEIRMKQFPALFEVQHTALKEGALMSTLSGSGSSFFNLCLKEDAPSLAQKLQDRFPKFRVLELKFDNKGVVRDD.

Residue 84–94 coordinates ATP; the sequence is PISRGLGSSSA.

The protein belongs to the GHMP kinase family. Homoserine kinase subfamily.

The protein resides in the cytoplasm. It carries out the reaction L-homoserine + ATP = O-phospho-L-homoserine + ADP + H(+). Its pathway is amino-acid biosynthesis; L-threonine biosynthesis; L-threonine from L-aspartate: step 4/5. Its function is as follows. Catalyzes the ATP-dependent phosphorylation of L-homoserine to L-homoserine phosphate. The sequence is that of Homoserine kinase from Wolinella succinogenes (strain ATCC 29543 / DSM 1740 / CCUG 13145 / JCM 31913 / LMG 7466 / NCTC 11488 / FDC 602W) (Vibrio succinogenes).